We begin with the raw amino-acid sequence, 1317 residues long: Toxin protein Tse5 (1317 aa).

The interval 395–419 (GRETRRRRDGQGRMLEEESPGKARY) is disordered. Positions 403-415 (DGQGRMLEEESPG) are enriched in basic and acidic residues.

Its function is as follows. Toxin secreted by the H1 type VI (H1-T6SS) secretion system that acts on bacterial target cells. The producing bacterium is protected by a cognate immunity protein. The protein is Toxin protein Tse5 of Pseudomonas aeruginosa (strain ATCC 15692 / DSM 22644 / CIP 104116 / JCM 14847 / LMG 12228 / 1C / PRS 101 / PAO1).